A 533-amino-acid polypeptide reads, in one-letter code: Bifunctional purine biosynthesis protein PurH (533 aa).

Residues 1–148 (MQPNRPIRQA…KNHQDVAIVV (148 aa)) enclose the MGS-like domain.

Belongs to the PurH family.

The enzyme catalyses (6R)-10-formyltetrahydrofolate + 5-amino-1-(5-phospho-beta-D-ribosyl)imidazole-4-carboxamide = 5-formamido-1-(5-phospho-D-ribosyl)imidazole-4-carboxamide + (6S)-5,6,7,8-tetrahydrofolate. It catalyses the reaction IMP + H2O = 5-formamido-1-(5-phospho-D-ribosyl)imidazole-4-carboxamide. Its pathway is purine metabolism; IMP biosynthesis via de novo pathway; 5-formamido-1-(5-phospho-D-ribosyl)imidazole-4-carboxamide from 5-amino-1-(5-phospho-D-ribosyl)imidazole-4-carboxamide (10-formyl THF route): step 1/1. The protein operates within purine metabolism; IMP biosynthesis via de novo pathway; IMP from 5-formamido-1-(5-phospho-D-ribosyl)imidazole-4-carboxamide: step 1/1. In Pasteurella multocida (strain Pm70), this protein is Bifunctional purine biosynthesis protein PurH.